A 251-amino-acid polypeptide reads, in one-letter code: Uridylate kinase (251 aa).

19–22 (KLSG) contacts ATP. UMP is bound at residue Gly61. The ATP site is built by Gly62 and Arg66. Residues Asp81 and 142-149 (TGNPYFTT) each bind UMP. Residues Thr169, Tyr175, and Asp178 each contribute to the ATP site.

It belongs to the UMP kinase family. Homohexamer.

The protein resides in the cytoplasm. It carries out the reaction UMP + ATP = UDP + ADP. It participates in pyrimidine metabolism; CTP biosynthesis via de novo pathway; UDP from UMP (UMPK route): step 1/1. Inhibited by UTP. In terms of biological role, catalyzes the reversible phosphorylation of UMP to UDP. The polypeptide is Uridylate kinase (Anaeromyxobacter dehalogenans (strain 2CP-C)).